Reading from the N-terminus, the 556-residue chain is Zinc finger protein 18 (556 aa).

An SCAN box domain is found at R41–P123. Positions Q169–E195 are disordered. In terms of domain architecture, KRAB spans E218–R291. C2H2-type zinc fingers lie at residues P415–H437, F443–H465, C471–H493, Y499–H521, and Y527–H549.

The protein belongs to the krueppel C2H2-type zinc-finger protein family.

The protein localises to the nucleus. May be involved in transcriptional regulation. The protein is Zinc finger protein 18 (Znf18) of Rattus norvegicus (Rat).